A 472-amino-acid polypeptide reads, in one-letter code: Coronin-6 (472 aa).

WD repeat units lie at residues 23–64 (QAYE…VLPL), 72–111 (KNYP…VWQI), 122–161 (EPII…IWNV), 165–204 (EVLL…IIDP), 210–251 (VAEQ…LWDP), and 256–296 (EPVA…YFEI). A disordered region spans residues 407–433 (KRNILDVRPPSGPRRSQSASDAPLSQQ). Over residues 420–433 (RRSQSASDAPLSQQ) the composition is skewed to polar residues. Residues 430 to 464 (LSQQHTLETLLEEIKALRERVQAQEQRITALENML) adopt a coiled-coil conformation.

In Homo sapiens (Human), this protein is Coronin-6 (CORO6).